The sequence spans 497 residues: Cytochrome P450 71A16 (497 aa).

A helical membrane pass occupies residues 1–21; that stretch reads MEMMILISLCLTTFLTILLFF. Cys-439 provides a ligand contact to heme.

It belongs to the cytochrome P450 family. Heme is required as a cofactor.

The protein resides in the membrane. Functionally, possesses triterpene oxidizing activity. Catalyzes the C23 hydroxylation of marneral to form 23-hydroxymarneral. Catalyzes the C23 hydroxylation of marnerol to form 23-hydroxymarnerol. The polypeptide is Cytochrome P450 71A16 (CYP71A16) (Arabidopsis thaliana (Mouse-ear cress)).